Reading from the N-terminus, the 316-residue chain is Geminin coiled-coil domain-containing protein 1 (316 aa).

Residues 82–117 (QISANKQLQDTLLQKEEELSRLHEENNKLKEFLNSA) are a coiled coil. Composition is skewed to polar residues over residues 134 to 155 (GQSS…STPG) and 207 to 234 (MSLQ…QAAT). Disordered regions lie at residues 134 to 160 (GQSS…KAKR) and 207 to 269 (MSLQ…DVAP). The residue at position 153 (threonine 153) is a Phosphothreonine; by cdk2. The segment covering 235 to 252 (SCSLSPSQCSSASLPESE) has biased composition (low complexity). Residues 253–262 (TASPLSSPTY) show a composition bias toward polar residues.

This sequence belongs to the GEMC1 family. In terms of assembly, interacts with topbp1. Interacts with Cdc45l and the kinase cdk2-cyclin-E (the interaction is direct). Highly phosphorylated by cdk2; stimulates initiation of DNA replication. As to expression, expressed in most tissues. Enriched in proliferating cells from skin and gut.

The protein resides in the nucleus. Its function is as follows. Regulator of DNA replication. Promotes initiation of chromosomal DNA replication by mediating topbp1- and cdk2-dependent recruitment of cdc45l onto replication origins. The protein is Geminin coiled-coil domain-containing protein 1 (gmnc) of Xenopus laevis (African clawed frog).